A 180-amino-acid polypeptide reads, in one-letter code: Large ribosomal subunit protein uL5 (180 aa).

Belongs to the universal ribosomal protein uL5 family. In terms of assembly, part of the 50S ribosomal subunit; part of the 5S rRNA/L5/L18/L25 subcomplex. Contacts the 5S rRNA and the P site tRNA. Forms a bridge to the 30S subunit in the 70S ribosome.

Functionally, this is one of the proteins that bind and probably mediate the attachment of the 5S RNA into the large ribosomal subunit, where it forms part of the central protuberance. In the 70S ribosome it contacts protein S13 of the 30S subunit (bridge B1b), connecting the 2 subunits; this bridge is implicated in subunit movement. Contacts the P site tRNA; the 5S rRNA and some of its associated proteins might help stabilize positioning of ribosome-bound tRNAs. In Chlamydia trachomatis serovar L2 (strain ATCC VR-902B / DSM 19102 / 434/Bu), this protein is Large ribosomal subunit protein uL5.